A 287-amino-acid chain; its full sequence is Pirin-1 (287 aa).

Thr-2 is modified (N-acetylthreonine).

It belongs to the pirin family. As to quaternary structure, interacts with the G protein alpha-1 subunit GPA1. Interacts with NFYB6 and NFYB9.

It localises to the nucleus. Functionally, involved in abscisic acid signal transduction. Plays a role in seed germination and early seedling development. Involved in the blue light (BL) signaling. This is Pirin-1 (PRN1) from Arabidopsis thaliana (Mouse-ear cress).